A 205-amino-acid chain; its full sequence is MSINYIATSKLPTPWGVFSMHGFEDTQTGKEHVALTFGEWQPSHAILGRIHSECLTGDALFSLRCDCGFQLQTAMQNIAEAGQGFILYLRQEGRGIGLLNKIRAYELQDAGANTVEANERLGFDADMRKYDMIAPMLEKIAVTQVKLMTNNPRKVKAMQDLGIVVAERVPLQVGKNRYNEAYLKTKSTELGHMMSEHHFNDDKGN.

R49–E53 is a GTP binding site. Zn(2+) contacts are provided by C54, C65, and C67. GTP-binding positions include Q70, E92 to R94, and T114. D126 acts as the Proton acceptor in catalysis. Catalysis depends on R128, which acts as the Nucleophile. 2 residues coordinate GTP: T149 and K154.

The protein belongs to the GTP cyclohydrolase II family. Requires Zn(2+) as cofactor.

The catalysed reaction is GTP + 4 H2O = 2,5-diamino-6-hydroxy-4-(5-phosphoribosylamino)-pyrimidine + formate + 2 phosphate + 3 H(+). It participates in cofactor biosynthesis; riboflavin biosynthesis; 5-amino-6-(D-ribitylamino)uracil from GTP: step 1/4. Catalyzes the conversion of GTP to 2,5-diamino-6-ribosylamino-4(3H)-pyrimidinone 5'-phosphate (DARP), formate and pyrophosphate. This Shewanella denitrificans (strain OS217 / ATCC BAA-1090 / DSM 15013) protein is GTP cyclohydrolase-2.